Consider the following 293-residue polypeptide: tRNA (guanine-N(7)-)-methyltransferase (293 aa).

A compositionally biased stretch (basic and acidic residues) spans 1–31; the sequence is MGGDKIKKDKRQKREDYRAAMRKDDISELPR. Disordered regions lie at residues 1–33 and 68–97; these read MGGDKIKKDKRQKREDYRAAMRKDDISELPRKK and IVDEPTTTSPPPPPPVPEQTPSEPDLTPLR. Residues 75–85 are compositionally biased toward pro residues; sequence TSPPPPPPVPE. S-adenosyl-L-methionine-binding positions include Gly-111, 134–135, 169–170, and Cys-189; these read EI and NT. Residue Asp-192 is part of the active site. 267–269 is a binding site for S-adenosyl-L-methionine; sequence TEE.

Belongs to the class I-like SAM-binding methyltransferase superfamily. TrmB family. Forms a complex with TRM82.

It is found in the nucleus. It carries out the reaction guanosine(46) in tRNA + S-adenosyl-L-methionine = N(7)-methylguanosine(46) in tRNA + S-adenosyl-L-homocysteine. It functions in the pathway tRNA modification; N(7)-methylguanine-tRNA biosynthesis. In terms of biological role, catalyzes the formation of N(7)-methylguanine at position 46 (m7G46) in tRNA. This is tRNA (guanine-N(7)-)-methyltransferase from Chaetomium globosum (strain ATCC 6205 / CBS 148.51 / DSM 1962 / NBRC 6347 / NRRL 1970) (Soil fungus).